We begin with the raw amino-acid sequence, 507 residues long: MESDEAAAVSPQATTPSGGTGASGPKKRGRKPKTKEDSQTPSSQQQSDVKMKESGKKTQQSPSVDEKYSQWKGLVPILYDWLANHNLVWPSLSCRWGPQLEQATYKNRQRLYLSEQTDGSVPNTLVIANCEVVKPRVAAAEHISQFNEEARSPFVKKYKTIIHPGEVNRIRELPQNSKIVATHTDSPDVLIWDVETQPNRHAVLGAANSRPDLILTGHQDNAEFALAMCPTEPFVLSGGKDKSVVLWSIQDHITTIGTDSKSSGSIIKQTGEGTDKNESPTVGPRGVYHGHEDTVEDVAFSPTSAQEFCSVGDDSCLILWDARTGTNPVTKVEKAHDADLHCVDWNPHDDNLILTGSADNTVRLFDRRKLTANGVGSPIYKFEGHKAAVLCVQWSPDKSSVFGSSAEDGLLNIWDYDRVSKKSDRAAKSPAGLFFQHAGHRDKVVDFHWNASDPWTIVSVSDDCETTGGGGTLQIWRMSDLIYRPEEEVVAELEKFKSHVMTCASKP.

Residue M1 is modified to N-acetylmethionine. Positions 1 to 66 are disordered; it reads MESDEAAAVS…KTQQSPSVDE (66 aa). WD repeat units lie at residues 95–137, 162–202, and 217–257; these read RWGP…KPRV, IHPG…NRHA, and GHQD…TTIG. Residues 258–272 are compositionally biased toward polar residues; sequence TDSKSSGSIIKQTGE. Residues 258–282 are disordered; that stretch reads TDSKSSGSIIKQTGEGTDKNESPTV. WD repeat units lie at residues 290 to 330, 335 to 375, 384 to 424, and 439 to 486; these read GHED…NPVT, AHDA…ANGV, GHKA…KKSD, and GHRD…YRPE. The DWD box signature appears at 308 to 323; it reads FCSVGDDSCLILWDAR.

This sequence belongs to the WD repeat RBAP46/RBAP48/MSI1 family. As to quaternary structure, interacts with AHL16 and HOS1. Interacts with LHP1, PDP1, PDP2 and PDP3. Component of the PRC2 (polycomb repressive complex 2) complex which regulates histone methylation on histone H3K27. As to expression, expressed in rosette leaves, cauline leaves, main stems and developing fruits. Expressed at higher levels in roots and flowers.

It is found in the nucleus. Core histone-binding subunit that may target chromatin assembly factors, chromatin remodeling factors and histone deacetylases to their histone substrates in a manner that is regulated by nucleosomal DNA. Component of the flowering autonomous pathway which positively regulates flowering by promoting transcriptional repression of the flowering repressor FLC. May promote histone deacetylation at the FLC locus leading to the formation of repressive chromatin structures. Forms a histone deacetylase complex with HDA5, HDA6 and FLD that represses FLC gene expression to control flowering time. Also negatively regulates cold-responsive genes. Acts together with PDP1 and MSI5 to regulate the function of the PRC2 complex on FLC. Required for systemic acquired resistance (SAR) toward pathogenic bacteria (e.g. Pseudomonas syringae pv tomato DC3000 (avrPto)). Together with FLD and MSI4/FVE, contributes to dehydroabietinal-dependent (DA, a diterpenoid tricyclic diterpene) activation of flowering ans SAR. The polypeptide is WD-40 repeat-containing protein MSI4 (Arabidopsis thaliana (Mouse-ear cress)).